Reading from the N-terminus, the 204-residue chain is ATP phosphoribosyltransferase (204 aa).

The protein belongs to the ATP phosphoribosyltransferase family. Short subfamily. As to quaternary structure, heteromultimer composed of HisG and HisZ subunits.

It localises to the cytoplasm. It carries out the reaction 1-(5-phospho-beta-D-ribosyl)-ATP + diphosphate = 5-phospho-alpha-D-ribose 1-diphosphate + ATP. It functions in the pathway amino-acid biosynthesis; L-histidine biosynthesis; L-histidine from 5-phospho-alpha-D-ribose 1-diphosphate: step 1/9. In terms of biological role, catalyzes the condensation of ATP and 5-phosphoribose 1-diphosphate to form N'-(5'-phosphoribosyl)-ATP (PR-ATP). Has a crucial role in the pathway because the rate of histidine biosynthesis seems to be controlled primarily by regulation of HisG enzymatic activity. The sequence is that of ATP phosphoribosyltransferase from Staphylococcus aureus (strain Mu3 / ATCC 700698).